The sequence spans 118 residues: Small ribosomal subunit protein uS13 (118 aa).

The interval 94–118 (SLPLRGQRTKTNARTRKGPRKPIKK) is disordered.

The protein belongs to the universal ribosomal protein uS13 family. As to quaternary structure, part of the 30S ribosomal subunit. Forms a loose heterodimer with protein S19. Forms two bridges to the 50S subunit in the 70S ribosome.

Its function is as follows. Located at the top of the head of the 30S subunit, it contacts several helices of the 16S rRNA. In the 70S ribosome it contacts the 23S rRNA (bridge B1a) and protein L5 of the 50S subunit (bridge B1b), connecting the 2 subunits; these bridges are implicated in subunit movement. Contacts the tRNAs in the A and P-sites. The chain is Small ribosomal subunit protein uS13 from Shewanella amazonensis (strain ATCC BAA-1098 / SB2B).